A 30-amino-acid polypeptide reads, in one-letter code: Small toxic protein BsrE (30 aa).

Residues 4–24 (FQALMLMLAIGSFIIALLTYI) traverse the membrane as a helical segment.

The protein resides in the cell membrane. Toxic component of a type I toxin-antitoxin (TA) system; overexpression in the absence of cognate antisense antitoxin SR5 RNA leads to cell lysis. Base pairing occurs between the 3' UTRs of bsrE mRNA and SR5 RNA which leads to bsrE mRNA degradation initiated by RNase III (rnc) and RNase J1 (rnjA). Genetic evidence suggests an unidentified RNA-binding protein may exist that promotes TA RNA interaction. In Bacillus subtilis (strain 168), this protein is Small toxic protein BsrE.